Consider the following 532-residue polypeptide: Protein PTST homolog 2, chloroplastic (532 aa).

A chloroplast-targeting transit peptide spans 1–71 (MVSINSGPIS…KPRKKSCCSR (71 aa)). Disordered stretches follow at residues 165 to 201 (QLPNCNSPEMDKTLNHGDLDLSSNLSSSTEQVESRND), 256 to 292 (EVDGSRGSGEYAQSRYQGAKSVSGKPGLSDSPTSETW), 314 to 347 (SSGLTGVKKDDTKKDSGDSMNGKDRIASSSEDVN), and 367 to 388 (HSLRSPPDKVVTSKDSETTAGN). Over residues 173–183 (EMDKTLNHGDL) the composition is skewed to basic and acidic residues. Residues 320–339 (VKKDDTKKDSGDSMNGKDRI) are compositionally biased toward basic and acidic residues. The stretch at 389-454 (LENLSDDWEY…ASRALRLLRT (66 aa)) forms a coiled coil.

Interacts with PTST3 and SS4. Interacts with MFP1; the interaction is essential for the initiation of starch granules biosynthesis in leaf chloroplasts, for the correct location of the process in the stromal spaces between the thylakoid membranes, and for the association of this protein with the thylakoid membranes. Interacts with PII1/MRC; the interaction is essential for the initiation of starch granules biosynthesis in leaf chloroplasts.

It localises to the plastid. It is found in the chloroplast. The protein resides in the chloroplast thylakoid membrane. Functionally, involved in starch granule initiation in leaf chloroplasts. Binds and delivers suitable maltooligosaccharide substrates to starch synthase 4 (SS4). The chain is Protein PTST homolog 2, chloroplastic from Arabidopsis thaliana (Mouse-ear cress).